A 492-amino-acid chain; its full sequence is Catalase isozyme 1 (492 aa).

Active-site residues include H65 and N138. Y348 is a binding site for heme.

It belongs to the catalase family. Homotetramer. Requires heme as cofactor.

Its subcellular location is the cytoplasm. The protein localises to the cytosol. The protein resides in the peroxisome matrix. It carries out the reaction 2 H2O2 = O2 + 2 H2O. Inhibited by salicylic acid. Functionally, catalyzes the degradation of hydrogen peroxide (H(2)O(2)) generated by peroxisomal oxidases to water and oxygen, thereby protecting cells from the toxic effects of hydrogen peroxide. The polypeptide is Catalase isozyme 1 (CAT-1) (Nicotiana tabacum (Common tobacco)).